The primary structure comprises 425 residues: Xylose isomerase (425 aa).

Catalysis depends on residues H101 and D104. Residues E232, E268, H271, D296, D307, D309, and D339 each coordinate Mg(2+).

The protein belongs to the xylose isomerase family. As to quaternary structure, homotetramer. Mg(2+) serves as cofactor.

It is found in the cytoplasm. It catalyses the reaction alpha-D-xylose = alpha-D-xylulofuranose. This chain is Xylose isomerase, found in Salmonella paratyphi A (strain ATCC 9150 / SARB42).